Reading from the N-terminus, the 605-residue chain is MLLKELSAVASPLNDQQIDQLQQAAAESSPQQLAWISGYFWGLSQTQASTHLQSVSQPGVVAAAQPAGKLTIIYASQTGNAKGVAIALKEEATAAGIAVELVSAGDYKGKNFAKETHVILIASTHGEGEAPDDAIDLHEFLQSKKAPKLPNLQYAVIGLGDSSYEFFCQTAKDFDSYLSKLGAQPMLERLDCDVDYDAPAAEWRVKALAKAKETLSTGDADVVPLPITQSQQAVSQYSKQNPYEATLLTSQKITGRHSGKDVRHIEIDLEGSGLTYQAGDALGVWYENDPELALAIVAKVGLSGEELIDVDGEHIQLVTALVSQYEITSANPQLVTKFAALSESKKLEKLVADKNKLREYSGNTQIIDVLAEKKTQLSAEQLISLLRRLTPRLYSISSSQEEVGEEVHLTVGVVEFEKGEESRQGGASSFLSHRLEEGAAVKVFVEENNNFKLPADDNTPVIMIGPGTGIAPFRAFVQERDNREAEGKNWLFFGDRTFTDDFLYQVEWQKYLKSGVVQQLDVAFSRDQVEKVYVQHRVLEHAEQVWQWLQEGAHVYVCGDMNHMAKDVHDALLTVIEQQGKQSREQAEQYLNELRKSKRYQKDVY.

A Flavodoxin-like domain is found at 70 to 208 (LTIIYASQTG…PAAEWRVKAL (139 aa)). FMN contacts are provided by residues 76-81 (SQTGNA), 123-126 (STHG), and 159-168 (LGDSSYEFFC). The FAD-binding FR-type domain maps to 240-454 (QNPYEATLLT…VEENNNFKLP (215 aa)). Residues Thr-328, Gly-362, 392–395 (RLYS), 410–412 (TVG), and 425–428 (GGAS) contribute to the FAD site. Residues 525–526 (SR), 531–535 (KVYVQ), and Asp-567 each bind NADP(+). Tyr-605 serves as a coordination point for FAD.

This sequence belongs to the NADPH-dependent sulphite reductase flavoprotein subunit CysJ family. The protein in the N-terminal section; belongs to the flavodoxin family. It in the C-terminal section; belongs to the flavoprotein pyridine nucleotide cytochrome reductase family. Alpha(8)-beta(8). The alpha component is a flavoprotein, the beta component is a hemoprotein. Requires FAD as cofactor. FMN serves as cofactor.

The catalysed reaction is hydrogen sulfide + 3 NADP(+) + 3 H2O = sulfite + 3 NADPH + 4 H(+). It participates in sulfur metabolism; hydrogen sulfide biosynthesis; hydrogen sulfide from sulfite (NADPH route): step 1/1. Its function is as follows. Component of the sulfite reductase complex that catalyzes the 6-electron reduction of sulfite to sulfide. This is one of several activities required for the biosynthesis of L-cysteine from sulfate. The flavoprotein component catalyzes the electron flow from NADPH -&gt; FAD -&gt; FMN to the hemoprotein component. The polypeptide is Sulfite reductase [NADPH] flavoprotein alpha-component (Photobacterium profundum (strain SS9)).